The sequence spans 277 residues: uncharacterized protein (277 aa).

32-39 (GPQGSGKS) contacts ATP.

It belongs to the GLYK kinase family.

It is found in the cytoplasm. The protein resides in the nucleus. Has a role in meiosis. This is an uncharacterized protein from Schizosaccharomyces pombe (strain 972 / ATCC 24843) (Fission yeast).